The primary structure comprises 305 residues: Ribonuclease Z (305 aa).

Positions 61, 63, 65, 66, 141, 209, and 268 each coordinate Zn(2+). Residue D65 is the Proton acceptor of the active site.

This sequence belongs to the RNase Z family. In terms of assembly, homodimer. It depends on Zn(2+) as a cofactor.

The enzyme catalyses Endonucleolytic cleavage of RNA, removing extra 3' nucleotides from tRNA precursor, generating 3' termini of tRNAs. A 3'-hydroxy group is left at the tRNA terminus and a 5'-phosphoryl group is left at the trailer molecule.. Zinc phosphodiesterase, which displays some tRNA 3'-processing endonuclease activity. Probably involved in tRNA maturation, by removing a 3'-trailer from precursor tRNA. This is Ribonuclease Z from Clostridioides difficile (strain 630) (Peptoclostridium difficile).